Reading from the N-terminus, the 638-residue chain is Actin-regulating kinase 1 (638 aa).

Residues 22 to 298 (VEIIKYLTSG…VYQLLKRISI (277 aa)) form the Protein kinase domain. ATP contacts are provided by residues 28–36 (LTSGGFAQV) and lysine 56. Residue aspartate 159 is the Proton acceptor of the active site. Position 478 is a phosphoserine (serine 478). The segment covering 482–515 (YSTRGNIKKNQSVKESLTSSSLPGTSFTPTSTKV) has biased composition (polar residues). Positions 482–518 (YSTRGNIKKNQSVKESLTSSSLPGTSFTPTSTKVNLK) are disordered. Phosphoserine occurs at positions 522 and 535. Residues 569 to 638 (SEESFNARKM…LAGRKLSLDK (70 aa)) form a disordered region. Residues 582 to 593 (KLHEKGEIDKPT) are compositionally biased toward basic and acidic residues. Positions 602–615 (SKDKKTKPTPPPKP) are interaction with SH3 domain of ABP1.

The protein belongs to the protein kinase superfamily. Ser/Thr protein kinase family. As to quaternary structure, interacts with ABP1, which is required for proper actin patch localization.

It is found in the cytoplasm. The protein localises to the cytoskeleton. It localises to the actin patch. The catalysed reaction is L-seryl-[protein] + ATP = O-phospho-L-seryl-[protein] + ADP + H(+). It catalyses the reaction L-threonyl-[protein] + ATP = O-phospho-L-threonyl-[protein] + ADP + H(+). Its function is as follows. Involved in regulation of actin cytoskeleton organization and endocytosis. The protein is Actin-regulating kinase 1 (ARK1) of Saccharomyces cerevisiae (strain ATCC 204508 / S288c) (Baker's yeast).